Consider the following 269-residue polypeptide: Capsid assembly scaffolding protein (269 aa).

The protein belongs to the T4likevirus capsid assembly scaffolding protein family.

It localises to the virion. Its function is as follows. Scaffolding protein involved in the icosahedric procapsid assembly. Coassembles with the capsid proteins to form the procapsid, in which the scaffolding protein is found within the external shell of icosahedrally arranged capsid protein subunits. In a subsequent step the scaffolding protein molecules are cleaved by the viral protease and released, except for the internal peptide VII. In terms of biological role, cleavage product of Gp22 that is incorporated into the mature phage head. The polypeptide is Capsid assembly scaffolding protein (22) (Enterobacteria phage T4 (Bacteriophage T4)).